Here is a 303-residue protein sequence, read N- to C-terminus: Protoheme IX farnesyltransferase (303 aa).

The next 9 helical transmembrane spans lie at 17–37, 42–62, 91–111, 114–134, 142–162, 168–188, 208–228, 231–251, and 270–290; these read GVVMLLMVTAVAGMFLATEPA, LATFIPAFVGLSLAMMASAAI, AAITFAVLLATASMIMLYFLV, LTAWLTLFGFVGYAFIYTLYL, IVIGGIAGAIPPLLGWTAVTG, AWLLVLIIFVWTPPHFWALAI, IPFTRESVLYYTILLFICTLL, LTGMSDLIYLLSALILGLVFL, and FGYSITYLFALFTALLVDHYL.

This sequence belongs to the UbiA prenyltransferase family. Protoheme IX farnesyltransferase subfamily.

Its subcellular location is the cell inner membrane. The catalysed reaction is heme b + (2E,6E)-farnesyl diphosphate + H2O = Fe(II)-heme o + diphosphate. It functions in the pathway porphyrin-containing compound metabolism; heme O biosynthesis; heme O from protoheme: step 1/1. Its function is as follows. Converts heme B (protoheme IX) to heme O by substitution of the vinyl group on carbon 2 of heme B porphyrin ring with a hydroxyethyl farnesyl side group. The protein is Protoheme IX farnesyltransferase of Alcanivorax borkumensis (strain ATCC 700651 / DSM 11573 / NCIMB 13689 / SK2).